The sequence spans 493 residues: Angiopoietin-related protein 2 (493 aa).

Positions Met-1 to Ala-19 are cleaved as a signal peptide. Coiled-coil stretches lie at residues Glu-77 to Gly-115 and Ala-152 to Glu-202. 2 N-linked (GlcNAc...) asparagine glycosylation sites follow: Asn-164 and Asn-192. Residues Asp-269–Pro-489 form the Fibrinogen C-terminal domain. Disulfide bonds link Cys-278/Cys-307 and Cys-430/Cys-443.

Widely expressed in heart, tongue, lung and skeletal muscle. Also found in lower levels in kidney, epididymis and testis.

Its subcellular location is the secreted. Its function is as follows. Induces sprouting in endothelial cells through an autocrine and paracrine action. The protein is Angiopoietin-related protein 2 (Angptl2) of Mus musculus (Mouse).